The following is a 130-amino-acid chain: Guanyl-specific ribonuclease T1 (130 aa).

A signal peptide spans 1–26; that stretch reads MMYSKLLTLTTLLLPTALALPSLVER. Disulfide bonds link C28–C36 and C32–C129. H66 is an active-site residue. E84 (proton acceptor) is an active-site residue. The active-site Proton donor is H118.

The protein belongs to the ribonuclease N1/T1 family. Monomer.

The catalysed reaction is [RNA] containing guanosine + H2O = an [RNA fragment]-3'-guanosine-3'-phosphate + a 5'-hydroxy-ribonucleotide-3'-[RNA fragment].. In Aspergillus oryzae (strain ATCC 42149 / RIB 40) (Yellow koji mold), this protein is Guanyl-specific ribonuclease T1 (rntA).